The primary structure comprises 188 residues: Elongation factor P (188 aa).

This sequence belongs to the elongation factor P family.

It localises to the cytoplasm. It functions in the pathway protein biosynthesis; polypeptide chain elongation. Functionally, involved in peptide bond synthesis. Stimulates efficient translation and peptide-bond synthesis on native or reconstituted 70S ribosomes in vitro. Probably functions indirectly by altering the affinity of the ribosome for aminoacyl-tRNA, thus increasing their reactivity as acceptors for peptidyl transferase. In Chloroherpeton thalassium (strain ATCC 35110 / GB-78), this protein is Elongation factor P.